We begin with the raw amino-acid sequence, 117 residues long: Immunoglobulin heavy variable 1-45 (117 aa).

An N-terminal signal peptide occupies residues 1–19 (MDWTWRILFLVAAVTDAYS). The segment at 20–44 (QMQLVQSGAEVKKTGSSVKVSCKAS) is framework-1. Residues 20-117 (QMQLVQSGAE…EDTAMYYCAR (98 aa)) enclose the Ig-like domain. Residues Cys41 and Cys115 are joined by a disulfide bond. A complementarity-determining-1 region spans residues 45 to 52 (GYTFTYRY). Residues 53-69 (LHWVRQAPGQALEWMGW) are framework-2. Residues 70-77 (ITPFNGNT) are complementarity-determining-2. The framework-3 stretch occupies residues 78–115 (NYAQKFQDRVTITRDRSMSTAYMELSSLRSEDTAMYYC). The segment at 116 to 117 (AR) is complementarity-determining-3.

Immunoglobulins are composed of two identical heavy chains and two identical light chains; disulfide-linked.

It is found in the secreted. The protein localises to the cell membrane. V region of the variable domain of immunoglobulin heavy chains that participates in the antigen recognition. Immunoglobulins, also known as antibodies, are membrane-bound or secreted glycoproteins produced by B lymphocytes. In the recognition phase of humoral immunity, the membrane-bound immunoglobulins serve as receptors which, upon binding of a specific antigen, trigger the clonal expansion and differentiation of B lymphocytes into immunoglobulins-secreting plasma cells. Secreted immunoglobulins mediate the effector phase of humoral immunity, which results in the elimination of bound antigens. The antigen binding site is formed by the variable domain of one heavy chain, together with that of its associated light chain. Thus, each immunoglobulin has two antigen binding sites with remarkable affinity for a particular antigen. The variable domains are assembled by a process called V-(D)-J rearrangement and can then be subjected to somatic hypermutations which, after exposure to antigen and selection, allow affinity maturation for a particular antigen. This Homo sapiens (Human) protein is Immunoglobulin heavy variable 1-45.